The following is a 538-amino-acid chain: Capsular polysaccharide biosynthesis protein RkpI (538 aa).

Helical transmembrane passes span 16–36 (LHDY…AVIF), 70–90 (VIAL…YAAA), 114–134 (LVFS…IFYA), 139–159 (IVFW…YMYF), 170–190 (LFWV…LFYG), and 212–232 (NTVR…WLGV).

Its subcellular location is the cell membrane. Its pathway is capsule biogenesis; capsule polysaccharide biosynthesis. Functionally, involved in antigen K (capsular polysaccharide) biosynthesis. The sequence is that of Capsular polysaccharide biosynthesis protein RkpI (rkpI) from Rhizobium meliloti (strain 1021) (Ensifer meliloti).